Consider the following 31-residue polypeptide: Cytochrome b6-f complex subunit 6 (31 aa).

The chain crosses the membrane as a helical span at residues 4–24 (ITSFFGFLLAALTITSVLFIG).

This sequence belongs to the PetL family. In terms of assembly, the 4 large subunits of the cytochrome b6-f complex are cytochrome b6, subunit IV (17 kDa polypeptide, PetD), cytochrome f and the Rieske protein, while the 4 small subunits are PetG, PetL, PetM and PetN. The complex functions as a dimer.

The protein resides in the plastid. It is found in the chloroplast thylakoid membrane. In terms of biological role, component of the cytochrome b6-f complex, which mediates electron transfer between photosystem II (PSII) and photosystem I (PSI), cyclic electron flow around PSI, and state transitions. PetL is important for photoautotrophic growth as well as for electron transfer efficiency and stability of the cytochrome b6-f complex. This is Cytochrome b6-f complex subunit 6 from Oenothera elata subsp. hookeri (Hooker's evening primrose).